The sequence spans 1836 residues: Sodium channel protein type 4 subunit alpha (1836 aa).

The Cytoplasmic segment spans residues 1-131; the sequence is MARPSLCTLV…RGAIKVLIHA (131 aa). Residues 39–60 show a composition bias toward basic and acidic residues; it reads LQRNKQMEIEEPERKPRSDLEA. The interval 39 to 63 is disordered; the sequence is LQRNKQMEIEEPERKPRSDLEAGKN. An I repeat occupies 113–454; that stretch reads LLSPFSVVRR…VVAMAYAEQN (342 aa). The chain crosses the membrane as a helical span at residues 132 to 150; that stretch reads LFSMFIMITILTNCVFMTM. Topologically, residues 151–157 are extracellular; it reads SDPPPWS. Residues 158–178 form a helical membrane-spanning segment; sequence KNVEYTFTGIYTFESLIKILA. The Cytoplasmic segment spans residues 179–192; it reads RGFCVDDFTFLRDP. The helical transmembrane segment at 193–210 threads the bilayer; the sequence is WNWLDFSVIMMAYLTEFV. The Extracellular portion of the chain corresponds to 211–216; the sequence is DLGNIS. Asn214 carries an N-linked (GlcNAc...) asparagine glycan. A helical transmembrane segment spans residues 217–233; it reads ALRTFRVLRALKTITVI. Over 234 to 252 the chain is Cytoplasmic; sequence PGLKTIVGALIQSVKKLSD. Residues 253 to 272 form a helical membrane-spanning segment; it reads VMILTVFCLSVFALVGLQLF. The Extracellular segment spans residues 273 to 391; that stretch reads MGNLRQKCVR…PNYGYTSYDT (119 aa). Residues Cys280 and Cys360 are joined by a disulfide bond. Residues Asn288, Asn291, Asn297, Asn303, Asn315, Asn321, Asn333, and Asn362 are each glycosylated (N-linked (GlcNAc...) asparagine). Residues Cys369 and Cys375 are joined by a disulfide bond. The pore-forming intramembrane region spans 392 to 416; that stretch reads FSWAFLALFRLMTQDYWENLFQLTL. The Extracellular segment spans residues 417 to 423; the sequence is RAAGKTY. Residues 424 to 444 traverse the membrane as a helical segment; sequence MIFFVVIIFLGSFYLINLILA. At 445-578 the chain is on the cytoplasmic side; the sequence is VVAMAYAEQN…NIIHLIVMDP (134 aa). Residues 493-530 are disordered; sequence GGEADGDPAHGKDCNGSLDTSQGEKGAPRQSSSGDSGI. Residues 509-528 show a composition bias toward polar residues; that stretch reads SLDTSQGEKGAPRQSSSGDS. Residues 560-832 form an II repeat; sequence CCAPWLKFKN…QIAIGRIKLG (273 aa). A helical transmembrane segment spans residues 579 to 597; sequence FVDLGITICIVLNTLFMAM. Over 598–608 the chain is Extracellular; sequence EHYPMTEHFDN. The chain crosses the membrane as a helical span at residues 609 to 628; the sequence is VLTVGNLVFTGIFTAEMVLK. Residues 629 to 642 are Cytoplasmic-facing; sequence LIAMDPYEYFQQGW. A helical transmembrane segment spans residues 643 to 662; sequence NIFDSIIVTLSLVELGLANV. Residues 663 to 664 are Extracellular-facing; it reads QG. Residues 665-682 form a helical membrane-spanning segment; the sequence is LSVLRSFRLLRVFKLAKS. Over 683–698 the chain is Cytoplasmic; sequence WPTLNMLIKIIGNSVG. The helical transmembrane segment at 699–717 threads the bilayer; sequence ALGNLTLVLAIIVFIFAVV. Topologically, residues 718 to 746 are extracellular; the sequence is GMQLFGKSYKECVCKIALDCNLPRWHMHD. The cysteines at positions 731 and 737 are disulfide-linked. The pore-forming intramembrane region spans 747-767; it reads FFHSFLIVFRILCGEWIETMW. Over 768-778 the chain is Extracellular; that stretch reads DCMEVAGQAMC. Residues Cys769 and Cys778 are joined by a disulfide bond. A helical transmembrane segment spans residues 779 to 797; that stretch reads LTVFLMVMVIGNLVVLNLF. Residues 798–1032 lie on the Cytoplasmic side of the membrane; it reads LALLLSSFSA…ACFKIVEHNW (235 aa). Disordered regions lie at residues 863–885 and 930–992; these read GAGE…PPEE and ESDL…QPEE. Residues 876-885 show a composition bias toward basic and acidic residues; it reads EDEKKEPPEE. Composition is skewed to acidic residues over residues 930–947 and 975–992; these read ESDL…FSEP and EDPE…QPEE. Residues 1013 to 1326 form an III repeat; the sequence is RGKKWWTLRR…KKYYNAMKKL (314 aa). The helical transmembrane segment at 1033-1050 threads the bilayer; that stretch reads FETFIVFMILLSSGALAF. Over 1051–1063 the chain is Extracellular; it reads EDIYIEQRRVIRT. The chain crosses the membrane as a helical span at residues 1064-1082; it reads ILEYADKVFTYIFIMEMLL. Residues 1083 to 1096 lie on the Cytoplasmic side of the membrane; that stretch reads KWVAYGFKVYFTNA. A helical membrane pass occupies residues 1097–1115; that stretch reads WCWLDFLIVDVSIISLVAN. Topologically, residues 1116–1123 are extracellular; it reads WLGYSELG. Residues 1124-1142 traverse the membrane as a helical segment; sequence PIKSLRTLRALRPLRALSR. Topologically, residues 1143–1159 are cytoplasmic; it reads FEGMRVVVNALLGAIPS. A helical membrane pass occupies residues 1160–1179; it reads IMNVLLVCLIFWLIFSIMGV. The Extracellular portion of the chain corresponds to 1180–1230; the sequence is NLFAGKFYYCINTTTSERFDISEVNNKSECESLMHTGQVRWLNVKVNYDNV. Cys1189 and Cys1209 are oxidised to a cystine. Residues Asn1191 and Asn1205 are each glycosylated (N-linked (GlcNAc...) asparagine). The pore-forming intramembrane region spans 1231–1252; sequence GLGYLSLLQVATFKGWMDIMYA. Residues 1253 to 1269 are Extracellular-facing; that stretch reads AVDSREKEEQPQYEVNL. A helical transmembrane segment spans residues 1270–1291; sequence YMYLYFVIFIIFGSFFTLNLFI. Residues 1292–1354 are Cytoplasmic-facing; that stretch reads GVIIDNFNQQ…MVYDLVTKQA (63 aa). The tract at residues 1310–1312 is important for rapid channel inactivation; that stretch reads IFM. Residues 1335 to 1633 form an IV repeat; it reads IPRPQNKIQG…WEKFDPDATQ (299 aa). The helical transmembrane segment at 1355-1372 threads the bilayer; the sequence is FDITIMILICLNMVTMMV. Residues 1373–1383 lie on the Extracellular side of the membrane; the sequence is ETDNQSQLKVD. The chain crosses the membrane as a helical span at residues 1384-1402; that stretch reads ILYNINMIFIIIFTGECVL. Residues 1403–1414 lie on the Cytoplasmic side of the membrane; the sequence is KMLALRQYYFTV. A helical membrane pass occupies residues 1415–1432; the sequence is GWNIFDFVVVILSIVGLA. Over 1433 to 1445 the chain is Extracellular; the sequence is LSDLIQKYFVSPT. Residues 1446–1462 form a helical membrane-spanning segment; it reads LFRVIRLARIGRVLRLI. Over 1463 to 1481 the chain is Cytoplasmic; the sequence is RGAKGIRTLLFALMMSLPA. The chain crosses the membrane as a helical span at residues 1482 to 1499; it reads LFNIGLLLFLVMFIYSIF. Topologically, residues 1500-1521 are extracellular; sequence GMSNFAYVKKESGIDDMFNFET. The pore-forming intramembrane region spans 1522–1544; sequence FGNSIICLFEITTSAGWDGLLNP. The Extracellular segment spans residues 1545–1574; the sequence is ILNSGPPDCDPNLENPGTSVKGDCGNPSIG. Cys1553 and Cys1568 are oxidised to a cystine. The helical transmembrane segment at 1575–1597 threads the bilayer; the sequence is ICFFCSYIIISFLIVVNMYIAII. Over 1598 to 1836 the chain is Cytoplasmic; it reads LENFNVATEE…VRPGVKESLV (239 aa). Residues 1727–1756 form the IQ domain; it reads EEVCAIKIQRAYRRHLLQRSMKQASYMYRH. The tract at residues 1778 to 1836 is disordered; that stretch reads KMYGHENGNSSSPSPEEKGEAGDAGPTMGLMPISPSDTAWPPAPPPGQTVRPGVKESLV.

It belongs to the sodium channel (TC 1.A.1.10) family. Nav1.4/SCN4A subfamily. As to quaternary structure, the Nav1.4 voltage-gated sodium channel consists of an ion-conducting alpha subunit SCN4A which is functional on its own and a regulatory beta subunit SCN1B. SCN1B strongly enhances the presence of SCN4A at the cell surface. SCN1B is also required for rapid channel inactivation and recovery after inactivation. It prevents the decrease of channel activity in response to repetitive, high-frequency depolarizations. Interacts with the syntrophins SNTA1, SNTB1 and SNTB2 (via PDZ domain); probably links SCN4A to the actin cytoskeleton and the extracellular matrix via the dystrophin-associated protein complex and regulates its localization in muscle cells. Interacts with TMEM233; probable regulator of the channel.

The protein localises to the cell membrane. The enzyme catalyses Na(+)(in) = Na(+)(out). The channel is inhibited by tetrodotoxin and saxitoxin. Inhibited by the conotoxin GVIIJ. In terms of biological role, pore-forming subunit of Nav1.4, a voltage-gated sodium (Nav) channel that directly mediates the depolarizing phase of action potentials in excitable membranes. Navs, also called VGSCs (voltage-gated sodium channels) or VDSCs (voltage-dependent sodium channels), operate by switching between closed and open conformations depending on the voltage difference across the membrane. In the open conformation they allow Na(+) ions to selectively pass through the pore, along their electrochemical gradient. The influx of Na+ ions provokes membrane depolarization, initiating the propagation of electrical signals throughout cells and tissues. Highly expressed in skeletal muscles, Nav1.4 generates the action potential crucial for muscle contraction. The polypeptide is Sodium channel protein type 4 subunit alpha (Homo sapiens (Human)).